Here is a 377-residue protein sequence, read N- to C-terminus: T-protein (377 aa).

The Chorismate mutase domain maps to 1 to 92 (MSFMEALKDL…ESYANENQFG (92 aa)). One can recognise a Prephenate/arogenate dehydrogenase domain in the interval 101–364 (HKIVIVGGYG…DYSEQFLKES (264 aa)).

In the C-terminal section; belongs to the prephenate/arogenate dehydrogenase family.

Its subcellular location is the cytoplasm. It carries out the reaction chorismate = prephenate. It catalyses the reaction prephenate + NAD(+) = 3-(4-hydroxyphenyl)pyruvate + CO2 + NADH. Its pathway is amino-acid biosynthesis; L-tyrosine biosynthesis; (4-hydroxyphenyl)pyruvate from prephenate (NAD(+) route): step 1/1. The protein operates within metabolic intermediate biosynthesis; prephenate biosynthesis; prephenate from chorismate: step 1/1. The chain is T-protein (tyrA) from Haemophilus influenzae (strain ATCC 51907 / DSM 11121 / KW20 / Rd).